The primary structure comprises 152 residues: Acyl carrier protein, mitochondrial (152 aa).

Residues 73–148 (KLINERVLLV…DIIKYVADKE (76 aa)) enclose the Carrier domain. Serine 108 is modified (O-(pantetheine 4'-phosphoryl)serine).

Belongs to the acyl carrier protein (ACP) family. Complex I is composed of about 45 different subunits.

Its subcellular location is the mitochondrion. Its function is as follows. Carrier of the growing fatty acid chain in fatty acid biosynthesis. Accessory and non-catalytic subunit of the mitochondrial membrane respiratory chain NADH dehydrogenase (Complex I), which functions in the transfer of electrons from NADH to the respiratory chain. In Drosophila melanogaster (Fruit fly), this protein is Acyl carrier protein, mitochondrial.